We begin with the raw amino-acid sequence, 353 residues long: G-protein complex alpha subunit gpaA (353 aa).

The segment at 1–25 (MGCGMSTEDKEGKARNEEIENQLKR) is disordered. Positions 7–25 (TEDKEGKARNEEIENQLKR) are enriched in basic and acidic residues. Positions 32-353 (NEIKMLLLGA…QENLRLCGLI (322 aa)) constitute a G-alpha domain. The tract at residues 35–48 (KMLLLGAGESGKST) is G1 motif. Residues S47 and T181 each contribute to the a divalent metal cation site. Residues 173 to 181 (DVLRSRVKT) are G2 motif. The G3 motif stretch occupies residues 196 to 205 (YRMFDVGGQR). The tract at residues 265-272 (ILFLNKID) is G4 motif. Positions 323-328 (TCATDT) are G5 motif.

It belongs to the G-alpha family. G(q) subfamily. As to quaternary structure, g proteins are composed of 3 units; alpha, beta and gamma. The alpha chain contains the guanine nucleotide binding site. Interacts with gprM.

In terms of biological role, G-protein complex alpha subunit that plays a role in conidiation and regulation of the biosynthesis of secondary metabolites such as dihydroxynaphthalene (DHN)-melanin, via interaction with the G protein-coupled receptor gprM. This is G-protein complex alpha subunit gpaA from Aspergillus fumigatus (strain CBS 144.89 / FGSC A1163 / CEA10) (Neosartorya fumigata).